The primary structure comprises 580 residues: 2-succinyl-5-enolpyruvyl-6-hydroxy-3-cyclohexene-1-carboxylate synthase (580 aa).

The segment at 178-199 (LEPTPMPGDLTEPPAAAQPRDD) is disordered.

It belongs to the TPP enzyme family. MenD subfamily. Homodimer. Mg(2+) is required as a cofactor. Requires Mn(2+) as cofactor. Thiamine diphosphate serves as cofactor.

The enzyme catalyses isochorismate + 2-oxoglutarate + H(+) = 5-enolpyruvoyl-6-hydroxy-2-succinyl-cyclohex-3-ene-1-carboxylate + CO2. It participates in quinol/quinone metabolism; 1,4-dihydroxy-2-naphthoate biosynthesis; 1,4-dihydroxy-2-naphthoate from chorismate: step 2/7. It functions in the pathway quinol/quinone metabolism; menaquinone biosynthesis. Functionally, catalyzes the thiamine diphosphate-dependent decarboxylation of 2-oxoglutarate and the subsequent addition of the resulting succinic semialdehyde-thiamine pyrophosphate anion to isochorismate to yield 2-succinyl-5-enolpyruvyl-6-hydroxy-3-cyclohexene-1-carboxylate (SEPHCHC). The polypeptide is 2-succinyl-5-enolpyruvyl-6-hydroxy-3-cyclohexene-1-carboxylate synthase (Roseiflexus castenholzii (strain DSM 13941 / HLO8)).